The chain runs to 225 residues: Large ribosomal subunit protein bL25 (225 aa).

The tract at residues Glu206 to Leu225 is disordered.

It belongs to the bacterial ribosomal protein bL25 family. CTC subfamily. Part of the 50S ribosomal subunit; part of the 5S rRNA/L5/L18/L25 subcomplex. Contacts the 5S rRNA. Binds to the 5S rRNA independently of L5 and L18.

Its function is as follows. This is one of the proteins that binds to the 5S RNA in the ribosome where it forms part of the central protuberance. This chain is Large ribosomal subunit protein bL25, found in Vesicomyosocius okutanii subsp. Calyptogena okutanii (strain HA).